Here is a 284-residue protein sequence, read N- to C-terminus: Pantothenate synthetase (284 aa).

ATP is bound at residue 30-37 (MGNLHDGH). His-37 (proton donor) is an active-site residue. Gln-61 is a (R)-pantoate binding site. Residue Gln-61 coordinates beta-alanine. An ATP-binding site is contributed by 149–152 (GEKD). Gln-155 lines the (R)-pantoate pocket. ATP contacts are provided by residues Ile-178 and 186–189 (LSSR).

Belongs to the pantothenate synthetase family. Homodimer.

It localises to the cytoplasm. The catalysed reaction is (R)-pantoate + beta-alanine + ATP = (R)-pantothenate + AMP + diphosphate + H(+). It participates in cofactor biosynthesis; (R)-pantothenate biosynthesis; (R)-pantothenate from (R)-pantoate and beta-alanine: step 1/1. Functionally, catalyzes the condensation of pantoate with beta-alanine in an ATP-dependent reaction via a pantoyl-adenylate intermediate. The sequence is that of Pantothenate synthetase from Salmonella paratyphi B (strain ATCC BAA-1250 / SPB7).